We begin with the raw amino-acid sequence, 636 residues long: Threonine--tRNA ligase (636 aa).

The region spanning Met-1–Thr-63 is the TGS domain. The segment at Asp-244–Pro-535 is catalytic. Zn(2+)-binding residues include Cys-335, His-386, and His-512.

It belongs to the class-II aminoacyl-tRNA synthetase family. As to quaternary structure, homodimer. Zn(2+) is required as a cofactor.

It localises to the cytoplasm. The enzyme catalyses tRNA(Thr) + L-threonine + ATP = L-threonyl-tRNA(Thr) + AMP + diphosphate + H(+). Its function is as follows. Catalyzes the attachment of threonine to tRNA(Thr) in a two-step reaction: L-threonine is first activated by ATP to form Thr-AMP and then transferred to the acceptor end of tRNA(Thr). Also edits incorrectly charged L-seryl-tRNA(Thr). The sequence is that of Threonine--tRNA ligase from Anaplasma marginale (strain St. Maries).